The following is a 165-amino-acid chain: Large ribosomal subunit protein uL10 (165 aa).

The protein belongs to the universal ribosomal protein uL10 family. Part of the ribosomal stalk of the 50S ribosomal subunit. The N-terminus interacts with L11 and the large rRNA to form the base of the stalk. The C-terminus forms an elongated spine to which L12 dimers bind in a sequential fashion forming a multimeric L10(L12)X complex.

Functionally, forms part of the ribosomal stalk, playing a central role in the interaction of the ribosome with GTP-bound translation factors. This Shewanella piezotolerans (strain WP3 / JCM 13877) protein is Large ribosomal subunit protein uL10.